The following is a 768-amino-acid chain: Actin filament-associated protein 1-like 1 (768 aa).

A disordered region spans residues 82–145; the sequence is DLRDMPEDDG…GKSPEYISSH (64 aa). A phosphoserine mark is found at Ser94, Ser98, Ser104, and Ser153. The segment at 173 to 211 is disordered; it reads GELKSSYNDSDAMSSSYESYDEEEEEGKSPQPRHQWPSE. The segment covering 177–190 has biased composition (low complexity); the sequence is SSYNDSDAMSSSYE. The PH 1 domain occupies 220–316; sequence ECRICAFLLR…WLKVIREVSK (97 aa). Phosphoserine occurs at positions 329 and 343. One can recognise a PH 2 domain in the interval 418-512; that stretch reads EVPCCGYLNV…WLGLLLVEMG (95 aa). A Phosphotyrosine modification is found at Tyr557. Positions 566–604 are disordered; sequence QDEEPERPTGAQVKRHASSCSEKSHRVDPQVKVKRHASS. A compositionally biased stretch (basic and acidic residues) spans 587 to 596; that stretch reads EKSHRVDPQV. The stretch at 611-700 forms a coiled coil; sequence GKNRAEEDAR…VAVKERLQQS (90 aa). Residues 705–768 are disordered; that stretch reads PALGLSVSSK…KAKEWEMKKT (64 aa). Positions 710–729 are enriched in polar residues; it reads SVSSKPKSGETANKPQNSVP. Residue Ser747 is modified to Phosphoserine. Residues 759–768 are compositionally biased toward basic and acidic residues; it reads KAKEWEMKKT.

As to quaternary structure, interacts with CTTN. In terms of tissue distribution, expressed in breast, colon and brain. In all 3 tissues, expressed in the microvasculature (at protein level). In addition, in the breast, found in the contractile myoepithelial cell layer which surrounds the breast ducts (at protein level). In the colon, expressed in the mucous membrane and colonic crypts and in the smooth muscle cell layer which provide movement of the colon (at protein level). In the cerebellum, localized around the Purkinje neurons and the granule cells of the granular layer, but not inside cell bodies (at protein level). Outside of the cerebellar cortex, expressed in glial cells (at protein level). Highly expressed away from the cell bodies within the dentate nucleus (at protein level).

It is found in the cytoplasm. Its subcellular location is the cell projection. It localises to the podosome. The protein localises to the invadopodium. The protein resides in the cytoskeleton. It is found in the stress fiber. In terms of biological role, may be involved in podosome and invadosome formation. The protein is Actin filament-associated protein 1-like 1 (AFAP1L1) of Homo sapiens (Human).